The primary structure comprises 60 residues: Putative mercuric resistance protein (60 aa).

The chain is Putative mercuric resistance protein from Pseudomonas aeruginosa.